The sequence spans 108 residues: MMRGGMGNMQKMMKQMQKMQKEMQKAQEQLAEKTVEGTAGGGMVTVIANGHKQILEVKIKEEVVDPEDIEMLQDLVLAATNDALKKADELAAEMMGQFTKGLNIPGLF.

The tract at residues 1-34 is disordered; that stretch reads MMRGGMGNMQKMMKQMQKMQKEMQKAQEQLAEKT. A compositionally biased stretch (low complexity) spans 9 to 18; sequence MQKMMKQMQK. Positions 19–34 are enriched in basic and acidic residues; sequence MQKEMQKAQEQLAEKT.

This sequence belongs to the YbaB/EbfC family. Homodimer.

The protein localises to the cytoplasm. It localises to the nucleoid. In terms of biological role, binds to DNA and alters its conformation. May be involved in regulation of gene expression, nucleoid organization and DNA protection. This is Nucleoid-associated protein GWCH70_0020 from Geobacillus sp. (strain WCH70).